The sequence spans 463 residues: MKNYRTESDSFGEIQIEEKFYWGAQTQRSLENFKIGKQKMPEILIRALAILKKCAAQVNHEFGDLEAKIAISIDKATDRILEGEFEDNFPLVVWQTGSGTQTNMNMNEVIASIANEELTGKKGGKSPVHPNDHVNKGQSSNDSFPTAMHIATVLATKQQLIPALNNILTSLQDKSKDWDKIIKIGRTHLQDATPLTLKQEFSGYITQIEYALERIENALQKVYLLAQGGTAVGTGINSKIGFDIKFAEKVAEFTKQPFKTAPNKFESLAAHDALVEFSGTLNTIAVSLMKIANDIRLLGSGPRCGLGELHLPENEPGSSIMPGKVNPTQVEALTMVCSQVMGNHVTVTIAGSNGHLELNVFKPVIIYNILQSIELLSDSVNSFVTHCVKGLEPNIARINDLRDKSLMLVTALNPHIGYDNAAKIAKEAHKHGITLKEAAKKLNLLSEAKFDKIVVPEKMVSQS.

Substrate contacts are provided by residues S98–T100, H129–D132, S139–N141, and T187. The segment at K121–N141 is disordered. Catalysis depends on H188, which acts as the Proton donor/acceptor. Residue S318 is part of the active site. Substrate is bound by residues S319 and K324–N326.

Belongs to the class-II fumarase/aspartase family. Fumarase subfamily. In terms of assembly, homotetramer.

The protein resides in the cytoplasm. It carries out the reaction (S)-malate = fumarate + H2O. Its pathway is carbohydrate metabolism; tricarboxylic acid cycle; (S)-malate from fumarate: step 1/1. Involved in the TCA cycle. Catalyzes the stereospecific interconversion of fumarate to L-malate. In Rickettsia conorii (strain ATCC VR-613 / Malish 7), this protein is Fumarate hydratase class II.